The primary structure comprises 300 residues: Porphobilinogen deaminase (300 aa).

C239 is modified (S-(dipyrrolylmethanemethyl)cysteine).

Belongs to the HMBS family. Monomer. Dipyrromethane is required as a cofactor.

It carries out the reaction 4 porphobilinogen + H2O = hydroxymethylbilane + 4 NH4(+). The protein operates within porphyrin-containing compound metabolism; protoporphyrin-IX biosynthesis; coproporphyrinogen-III from 5-aminolevulinate: step 2/4. Functionally, tetrapolymerization of the monopyrrole PBG into the hydroxymethylbilane pre-uroporphyrinogen in several discrete steps. The protein is Porphobilinogen deaminase of Francisella tularensis subsp. tularensis (strain WY96-3418).